An 858-amino-acid polypeptide reads, in one-letter code: Leucine--tRNA ligase (858 aa).

Residues 42 to 52 (PYPSGRLHMGH) carry the 'HIGH' region motif. The short motif at 618 to 622 (KMSKS) is the 'KMSKS' region element. Residue Lys-621 participates in ATP binding.

It belongs to the class-I aminoacyl-tRNA synthetase family.

The protein localises to the cytoplasm. The enzyme catalyses tRNA(Leu) + L-leucine + ATP = L-leucyl-tRNA(Leu) + AMP + diphosphate. This chain is Leucine--tRNA ligase, found in Vibrio cholerae serotype O1 (strain ATCC 39315 / El Tor Inaba N16961).